A 161-amino-acid chain; its full sequence is Small ribosomal subunit protein uS9 (161 aa).

It belongs to the universal ribosomal protein uS9 family.

The chain is Small ribosomal subunit protein uS9 from Rickettsia typhi (strain ATCC VR-144 / Wilmington).